The sequence spans 174 residues: Protein FanG (174 aa).

The N-terminal stretch at 1-21 (MKKLYKAITVICILMSNLQSA) is a signal peptide. Cysteine 41 and cysteine 75 form a disulfide bridge.

Its subcellular location is the fimbrium. In terms of biological role, involved in the biosynthesis of K99 fimbriae. This chain is Protein FanG (fanG), found in Escherichia coli.